The primary structure comprises 465 residues: Citrate synthase-like protein (465 aa).

The interval 13 to 40 is disordered; that stretch reads HISDMVDSTKMNGNQSQDTAGRADTPVS. Polar residues predominate over residues 21–31; that stretch reads TKMNGNQSQDT. Residues histidine 357 and aspartate 413 contribute to the active site.

This sequence belongs to the citrate synthase family.

The protein operates within secondary metabolite biosynthesis. In terms of biological role, citrate synthase-like protein; part of the gene cluster that mediates the biosynthesis of squalestatin S1 (SQS1, also known as zaragozic acid A), a heavily oxidized fungal polyketide that offers potent cholesterol lowering activity by targeting squalene synthase (SS). SQS1 is composed of a 2,8-dioxobicyclic[3.2.1]octane-3,4,5-tricarboxyclic acid core that is connected to two lipophilic polyketide arms. These initial steps feature the priming of an unusual benzoic acid starter unit onto the highly reducing polyketide synthase pks2, followed by oxaloacetate extension and product release to generate a tricarboxylic acid containing product. The phenylalanine ammonia lyase (PAL) M7 and the acyl-CoA ligase M9 are involved in transforming phenylalanine into benzoyl-CoA. The citrate synthase-like protein R3 is involved in connecting the C-alpha-carbons of the hexaketide chain and oxaloacetate to afford the tricarboxylic acid unit. The potential hydrolytic enzymes, M8 and M10, are in close proximity to pks2 and may participate in product release. On the other side, the tetraketide arm is synthesized by a the squalestatin tetraketide synthase pks1 and enzymatically esterified to the core in the last biosynthetic step, by the acetyltransferase M4. The biosynthesis of the tetraketide must involve 3 rounds of chain extension. After the first and second rounds methyl-transfer occurs, and in all rounds of extension the ketoreductase and dehydratase are active. The enoyl reductase and C-MeT of pks1 are not active in the final round of extension. The acetyltransferase M4 appears to have a broad substrate selectivity for its acyl CoA substrate, allowing the in vitro synthesis of novel squalestatins. The biosynthesis of SQS1 requires several oxidative steps likely performed by oxidoreductases M1, R1 and R2. Finally, in support of the identification of the cluster as being responsible for SQS1 production, the cluster contains a gene encoding a putative squalene synthase (SS) R6, suggesting a likely mechanism for self-resistance. In Phoma sp. (strain ATCC 20986 / MF5453), this protein is Citrate synthase-like protein.